The sequence spans 261 residues: tRNA pseudouridine synthase A (261 aa).

The Nucleophile role is filled by aspartate 52. Tyrosine 111 lines the substrate pocket.

It belongs to the tRNA pseudouridine synthase TruA family. In terms of assembly, homodimer.

It carries out the reaction uridine(38/39/40) in tRNA = pseudouridine(38/39/40) in tRNA. Functionally, formation of pseudouridine at positions 38, 39 and 40 in the anticodon stem and loop of transfer RNAs. The polypeptide is tRNA pseudouridine synthase A (Jannaschia sp. (strain CCS1)).